The chain runs to 295 residues: Methionine aminopeptidase (295 aa).

Residue H62 participates in substrate binding. D82, D93, and H153 together coordinate a divalent metal cation. H161 is a binding site for substrate. A divalent metal cation is bound by residues E187 and E280.

It belongs to the peptidase M24A family. Methionine aminopeptidase archaeal type 2 subfamily. Monomer. Requires Co(2+) as cofactor. Zn(2+) serves as cofactor. It depends on Mn(2+) as a cofactor. The cofactor is Fe(2+).

It carries out the reaction Release of N-terminal amino acids, preferentially methionine, from peptides and arylamides.. In terms of biological role, removes the N-terminal methionine from nascent proteins. The N-terminal methionine is often cleaved when the second residue in the primary sequence is small and uncharged (Met-Ala-, Cys, Gly, Pro, Ser, Thr, or Val). In Pyrococcus horikoshii (strain ATCC 700860 / DSM 12428 / JCM 9974 / NBRC 100139 / OT-3), this protein is Methionine aminopeptidase.